Consider the following 469-residue polypeptide: NADH-quinone oxidoreductase subunit N (469 aa).

Transmembrane regions (helical) follow at residues Pro9 to Gly29, Val40 to Val60, Ala76 to Gly96, Glu105 to Ala125, Leu128 to Leu148, Tyr162 to Leu182, Val201 to Val221, Ala234 to Leu254, Leu265 to Ala285, Arg294 to Ala316, Tyr327 to Gly347, Ala365 to Ile385, Leu402 to Ile422, and Val448 to Val468.

This sequence belongs to the complex I subunit 2 family. NDH-1 is composed of 14 different subunits. Subunits NuoA, H, J, K, L, M, N constitute the membrane sector of the complex.

It is found in the cell membrane. It catalyses the reaction a quinone + NADH + 5 H(+)(in) = a quinol + NAD(+) + 4 H(+)(out). NDH-1 shuttles electrons from NADH, via FMN and iron-sulfur (Fe-S) centers, to quinones in the respiratory chain. The immediate electron acceptor for the enzyme in this species is believed to be a menaquinone. Couples the redox reaction to proton translocation (for every two electrons transferred, four hydrogen ions are translocated across the cytoplasmic membrane), and thus conserves the redox energy in a proton gradient. The protein is NADH-quinone oxidoreductase subunit N of Mycobacterium sp. (strain JLS).